The chain runs to 526 residues: Radial spoke head protein 6 homolog A (526 aa).

3 disordered regions span residues 180–231 (EGED…EENG), 371–411 (VKSE…DAEI), and 469–526 (PPAP…EEDD). Composition is skewed to acidic residues over residues 181 to 212 (GEDD…EAED) and 374 to 395 (EEEE…EPEP). A compositionally biased stretch (basic and acidic residues) spans 497–506 (QALKAAKEEA). Over residues 507–526 (EAAAEEMEEEEDEEEEEEDD) the composition is skewed to acidic residues.

The protein belongs to the flagellar radial spoke RSP4/6 family. In terms of assembly, component of sperm axonemal radial spoke complexes.

Its subcellular location is the cytoplasm. The protein localises to the cytoskeleton. It is found in the flagellum axoneme. In terms of biological role, functions as part of radial spoke complexes in the axoneme of sperm flagella that play an important part in motility. The triple radial spokes (RS1, RS2 and RS3) are required to modulate beating of the sperm flagellum. The sequence is that of Radial spoke head protein 6 homolog A (rsph6a) from Xenopus tropicalis (Western clawed frog).